The chain runs to 239 residues: Non-structural protein V (239 aa).

Disordered stretches follow at residues Pro-30–Ala-104 and Asn-126–Glu-180. A compositionally biased stretch (basic and acidic residues) spans Thr-65 to Lys-74. 2 stretches are compositionally biased toward polar residues: residues Pro-89 to Thr-98 and Ala-143 to Glu-153. Zn(2+) is bound by residues His-177, Cys-196, Cys-200, Cys-212, Cys-214, Cys-217, Cys-221, and Cys-224.

Interacts with host STAT1. Interacts with host TXNL1. Interacts (via C-terminus) with host CacyBP; this interaction inhibits host cell apoptosis.

It localises to the host cytoplasm. Its subcellular location is the host nucleus. In terms of biological role, protects the virus against cell antiviral state by blocking host interferon signaling. Mechanistically, targets host phosphorylated STAT1 (phospho-STAT1) for degradation, thereby inhibiting the interferon alpha signaling pathway. Plays a role in the inhibition of host apoptosis. Interacts with and down-regulates the expression of host TXNL1. In turn, inhibits TXNL1-induced apoptosis through the BCL2-BAX-caspase 3 pathway. Inhibits host apoptosis also by negatively regulating host CacyBP/SIP. Promotes viral replication by activating the extracellular signal-regulated kinase (ERK) pathway. In Gallus gallus (Chicken), this protein is Non-structural protein V (P/V).